A 585-amino-acid polypeptide reads, in one-letter code: MQHQLKACGDVKTSSRAQQNHRRSTAASAKRSVGAGNSFLATDVTNLEMNSNFMTRKLKKNGNGVIGSPLSNGYFGAQLTANSFNYTPQANPYSNLDFQMAMGSGDVPSLMGMPVHKPSMMLQSDPSMDLTQFTEELQAIQNMPFQPISSSQAALQAFLAANEAASIGSYGFSKSQMLPSNSMRVSGARKNRIVEVKNQNDRLFLVLSDPQASVSTRPTLVPLTRPLQSVAQSCLDLTKKQPFSTEPLYSRKVFIGGLPIDVPDEEVYVTFGSFGKVLIDWPRRPEHNGRASDMYESEMGRRNLRSVSGYVFLVFTHEDSVQDLVNACEFYDGKYYLQLSSPTMQDKAVQVRPWRLSDIDYFSEEKVTVDPRRTVFIGGVPRPTRACDLARSLQDYYGKVSYVGIDIDPELKYPKGAARVTFATAQSFVRAISGRFVQVTHAETNKRVEIKPYVMEDQYCDECEGDLCKHNYAPYYCGDSSCLQYYCEGCWDRMHYEMGQSRADHRPMVRTGDQTRILPRPPHHPAAHHSHQRPQYLLHQDQLDNHHSSRGNSSVISRIVNRNSATMLDHVPGKPFSAISASYGY.

A disordered region spans residues 1 to 32 (MQHQLKACGDVKTSSRAQQNHRRSTAASAKRS). RRM domains are found at residues 251 to 356 (RKVF…PWRL) and 373 to 444 (RTVF…HAET). Residues 513–533 (DQTRILPRPPHHPAAHHSHQR) are disordered. The segment covering 521-532 (PPHHPAAHHSHQ) has biased composition (basic residues).

As to quaternary structure, interacts with fbf-1.

Cytoplasmic polyadenylation element binding protein that binds to and regulates the translation of specific mRNAs. Essential for progression through meiosis. Involved in spermatogenesis. This is Cytoplasmic polyadenylation element-binding protein 1 (cpb-1) from Caenorhabditis briggsae.